The primary structure comprises 124 residues: CRISPR-associated endoribonuclease Cas2 4 (124 aa).

A Mg(2+)-binding site is contributed by aspartate 40.

The protein belongs to the CRISPR-associated endoribonuclease Cas2 protein family. In terms of assembly, homodimer, forms a heterotetramer with a Cas1 homodimer. Mg(2+) serves as cofactor.

Its function is as follows. CRISPR (clustered regularly interspaced short palindromic repeat), is an adaptive immune system that provides protection against mobile genetic elements (viruses, transposable elements and conjugative plasmids). CRISPR clusters contain sequences complementary to antecedent mobile elements and target invading nucleic acids. CRISPR clusters are transcribed and processed into CRISPR RNA (crRNA). Functions as a ssRNA-specific endoribonuclease. Involved in the integration of spacer DNA into the CRISPR cassette. The polypeptide is CRISPR-associated endoribonuclease Cas2 4 (Rhodospirillum rubrum (strain ATCC 11170 / ATH 1.1.1 / DSM 467 / LMG 4362 / NCIMB 8255 / S1)).